A 560-amino-acid chain; its full sequence is uncharacterized protein (560 aa).

The 281-residue stretch at 1-281 (MLWNWVALVG…LGSFFHVAMN (281 aa)) folds into the ABC transmembrane type-1 domain. 7 helical membrane passes run 2–22 (LWNWVALVGGIISAVVFSYIL), 32–52 (LLSAVILGIVLIAALALRAFA), 108–128 (IYFGRYLPQLFYSLLAPLTLF), 138–160 (TAIILLICVPLIPMSIIAVNKIA), 168–188 (WSIYVGLGSSFLDNLQGLITL), 223–243 (VSLMDLLAYGGAAIGILTALL), and 249–269 (QLSVLGVILFILLSSEFFIPL). The ABC transporter domain occupies 314-547 (VEIKDLHFSY…QGAYAEMFQQ (234 aa)). 347-354 (GKSGCGKS) provides a ligand contact to ATP.

The protein belongs to the ABC transporter superfamily.

The protein resides in the cell inner membrane. This is an uncharacterized protein from Haemophilus influenzae (strain ATCC 51907 / DSM 11121 / KW20 / Rd).